Here is a 330-residue protein sequence, read N- to C-terminus: Lipoyl synthase (330 aa).

[4Fe-4S] cluster is bound by residues Cys55, Cys60, Cys66, Cys81, Cys85, Cys88, and Ser292. The 215-residue stretch at 67–281 (WEDREATFLI…AEEAREIGFV (215 aa)) folds into the Radical SAM core domain.

It belongs to the radical SAM superfamily. Lipoyl synthase family. Requires [4Fe-4S] cluster as cofactor.

The protein resides in the cytoplasm. It carries out the reaction [[Fe-S] cluster scaffold protein carrying a second [4Fe-4S](2+) cluster] + N(6)-octanoyl-L-lysyl-[protein] + 2 oxidized [2Fe-2S]-[ferredoxin] + 2 S-adenosyl-L-methionine + 4 H(+) = [[Fe-S] cluster scaffold protein] + N(6)-[(R)-dihydrolipoyl]-L-lysyl-[protein] + 4 Fe(3+) + 2 hydrogen sulfide + 2 5'-deoxyadenosine + 2 L-methionine + 2 reduced [2Fe-2S]-[ferredoxin]. It participates in protein modification; protein lipoylation via endogenous pathway; protein N(6)-(lipoyl)lysine from octanoyl-[acyl-carrier-protein]: step 2/2. In terms of biological role, catalyzes the radical-mediated insertion of two sulfur atoms into the C-6 and C-8 positions of the octanoyl moiety bound to the lipoyl domains of lipoate-dependent enzymes, thereby converting the octanoylated domains into lipoylated derivatives. This chain is Lipoyl synthase, found in Cutibacterium acnes (strain DSM 16379 / KPA171202) (Propionibacterium acnes).